We begin with the raw amino-acid sequence, 342 residues long: Phosphate acyltransferase (342 aa).

The protein belongs to the PlsX family. As to quaternary structure, homodimer. Probably interacts with PlsY.

Its subcellular location is the cytoplasm. The catalysed reaction is a fatty acyl-[ACP] + phosphate = an acyl phosphate + holo-[ACP]. It participates in lipid metabolism; phospholipid metabolism. Catalyzes the reversible formation of acyl-phosphate (acyl-PO(4)) from acyl-[acyl-carrier-protein] (acyl-ACP). This enzyme utilizes acyl-ACP as fatty acyl donor, but not acyl-CoA. This chain is Phosphate acyltransferase, found in Blochmanniella pennsylvanica (strain BPEN).